The primary structure comprises 94 residues: Cell division topological specificity factor (94 aa).

It belongs to the MinE family.

Its function is as follows. Prevents the cell division inhibition by proteins MinC and MinD at internal division sites while permitting inhibition at polar sites. This ensures cell division at the proper site by restricting the formation of a division septum at the midpoint of the long axis of the cell. This Hamiltonella defensa subsp. Acyrthosiphon pisum (strain 5AT) protein is Cell division topological specificity factor.